The sequence spans 115 residues: Large ribosomal subunit protein bL31B (115 aa).

Belongs to the bacterial ribosomal protein bL31 family. Type B subfamily. In terms of assembly, part of the 50S ribosomal subunit.

The chain is Large ribosomal subunit protein bL31B from Polynucleobacter necessarius subsp. necessarius (strain STIR1).